Consider the following 162-residue polypeptide: Ribosomal RNA large subunit methyltransferase H (162 aa).

Gly108 contacts S-adenosyl-L-methionine.

Belongs to the RNA methyltransferase RlmH family. Homodimer.

Its subcellular location is the cytoplasm. The enzyme catalyses pseudouridine(1915) in 23S rRNA + S-adenosyl-L-methionine = N(3)-methylpseudouridine(1915) in 23S rRNA + S-adenosyl-L-homocysteine + H(+). Functionally, specifically methylates the pseudouridine at position 1915 (m3Psi1915) in 23S rRNA. The chain is Ribosomal RNA large subunit methyltransferase H from Methylobacterium sp. (strain 4-46).